The sequence spans 146 residues: uncharacterized protein (146 aa).

The protein belongs to the BlaI transcriptional regulatory family.

This is an uncharacterized protein from Latilactobacillus sakei (Lactobacillus sakei).